The following is a 183-amino-acid chain: ATP-dependent protease subunit HslV (183 aa).

T13 is a catalytic residue. Residues G168, C171, and T174 each coordinate Na(+).

This sequence belongs to the peptidase T1B family. HslV subfamily. As to quaternary structure, a double ring-shaped homohexamer of HslV is capped on each side by a ring-shaped HslU homohexamer. The assembly of the HslU/HslV complex is dependent on binding of ATP.

It is found in the cytoplasm. It carries out the reaction ATP-dependent cleavage of peptide bonds with broad specificity.. Its activity is regulated as follows. Allosterically activated by HslU binding. In terms of biological role, protease subunit of a proteasome-like degradation complex believed to be a general protein degrading machinery. In Xylella fastidiosa (strain M23), this protein is ATP-dependent protease subunit HslV.